The primary structure comprises 356 residues: NADH-quinone oxidoreductase subunit H (356 aa).

8 consecutive transmembrane segments (helical) span residues 4–24 (ALIL…LTGV), 79–99 (LLAP…IPFG), 127–147 (GVLY…IAGW), 166–186 (ISYE…TGSL), 198–218 (MWNI…TAMF), 251–271 (FFLA…LLFF), 289–309 (FIGL…FIWV), and 329–349 (MIPW…YWKE).

It belongs to the complex I subunit 1 family. NDH-1 is composed of 14 different subunits. Subunits NuoA, H, J, K, L, M, N constitute the membrane sector of the complex.

It is found in the cell inner membrane. It catalyses the reaction a quinone + NADH + 5 H(+)(in) = a quinol + NAD(+) + 4 H(+)(out). Functionally, NDH-1 shuttles electrons from NADH, via FMN and iron-sulfur (Fe-S) centers, to quinones in the respiratory chain. The immediate electron acceptor for the enzyme in this species is believed to be ubiquinone. Couples the redox reaction to proton translocation (for every two electrons transferred, four hydrogen ions are translocated across the cytoplasmic membrane), and thus conserves the redox energy in a proton gradient. This subunit may bind ubiquinone. This is NADH-quinone oxidoreductase subunit H from Leptospira biflexa serovar Patoc (strain Patoc 1 / ATCC 23582 / Paris).